The following is a 189-amino-acid chain: Ribosome maturation factor RimM (189 aa).

The region spanning 96–169 (EDEFYYADLE…TLLIDPLAAG (74 aa)) is the PRC barrel domain.

This sequence belongs to the RimM family. As to quaternary structure, binds ribosomal protein uS19.

Its subcellular location is the cytoplasm. An accessory protein needed during the final step in the assembly of 30S ribosomal subunit, possibly for assembly of the head region. Essential for efficient processing of 16S rRNA. May be needed both before and after RbfA during the maturation of 16S rRNA. It has affinity for free ribosomal 30S subunits but not for 70S ribosomes. In Rhizobium johnstonii (strain DSM 114642 / LMG 32736 / 3841) (Rhizobium leguminosarum bv. viciae), this protein is Ribosome maturation factor RimM.